The sequence spans 287 residues: Bifunctional protein FolD (287 aa).

NADP(+)-binding positions include 166 to 168 and isoleucine 232; that span reads GAS.

Belongs to the tetrahydrofolate dehydrogenase/cyclohydrolase family. Homodimer.

The enzyme catalyses (6R)-5,10-methylene-5,6,7,8-tetrahydrofolate + NADP(+) = (6R)-5,10-methenyltetrahydrofolate + NADPH. It carries out the reaction (6R)-5,10-methenyltetrahydrofolate + H2O = (6R)-10-formyltetrahydrofolate + H(+). Its pathway is one-carbon metabolism; tetrahydrofolate interconversion. Catalyzes the oxidation of 5,10-methylenetetrahydrofolate to 5,10-methenyltetrahydrofolate and then the hydrolysis of 5,10-methenyltetrahydrofolate to 10-formyltetrahydrofolate. This is Bifunctional protein FolD from Chromohalobacter salexigens (strain ATCC BAA-138 / DSM 3043 / CIP 106854 / NCIMB 13768 / 1H11).